Consider the following 119-residue polypeptide: uncharacterized protein (119 aa).

4 helical membrane passes run 3–23 (WVFL…MKLS), 29–49 (LIPS…LTLT), 58–78 (AYAV…FLFF), and 87–107 (VISI…EHVA).

The protein belongs to the drug/metabolite transporter (DMT) superfamily. Small multidrug resistance (SMR) (TC 2.A.7.1) family.

The protein resides in the cell membrane. This is an uncharacterized protein from Bacillus subtilis (strain 168).